Consider the following 155-residue polypeptide: Lipoprotein signal peptidase (155 aa).

A run of 2 helical transmembrane segments spans residues 52–72 (ILQG…AGIV) and 85–105 (LGVA…DRVF). Residues D111 and D129 contribute to the active site. The chain crosses the membrane as a helical span at residues 124–144 (IFNIADSSLCVGVILLFIQML).

Belongs to the peptidase A8 family.

The protein localises to the cell membrane. The catalysed reaction is Release of signal peptides from bacterial membrane prolipoproteins. Hydrolyzes -Xaa-Yaa-Zaa-|-(S,diacylglyceryl)Cys-, in which Xaa is hydrophobic (preferably Leu), and Yaa (Ala or Ser) and Zaa (Gly or Ala) have small, neutral side chains.. It functions in the pathway protein modification; lipoprotein biosynthesis (signal peptide cleavage). Its function is as follows. This protein specifically catalyzes the removal of signal peptides from prolipoproteins. The polypeptide is Lipoprotein signal peptidase (Bacillus pumilus (strain SAFR-032)).